The chain runs to 186 residues: Interferon beta-3 (186 aa).

The signal sequence occupies residues 1 to 21 (MTYRCLLPMVLLLCFSTTALS). Residues cysteine 52 and cysteine 161 are joined by a disulfide bond. N-linked (GlcNAc...) asparagine glycosylation is found at asparagine 131 and asparagine 173.

This sequence belongs to the alpha/beta interferon family. As to quaternary structure, monomer.

It localises to the secreted. In terms of biological role, has antiviral, antibacterial and anticancer activities. The protein is Interferon beta-3 (IFNB3) of Bos taurus (Bovine).